Consider the following 122-residue polypeptide: Small ribosomal subunit protein uS13 (122 aa).

The tract at residues 96-122 (PVRGQRTRTNARTRKGPKKTVGVRRAK) is disordered.

It belongs to the universal ribosomal protein uS13 family. Part of the 30S ribosomal subunit. Forms a loose heterodimer with protein S19. Forms two bridges to the 50S subunit in the 70S ribosome.

Functionally, located at the top of the head of the 30S subunit, it contacts several helices of the 16S rRNA. In the 70S ribosome it contacts the 23S rRNA (bridge B1a) and protein L5 of the 50S subunit (bridge B1b), connecting the 2 subunits; these bridges are implicated in subunit movement. Contacts the tRNAs in the A and P-sites. The protein is Small ribosomal subunit protein uS13 of Halothermothrix orenii (strain H 168 / OCM 544 / DSM 9562).